The following is a 223-amino-acid chain: MIQTTFPDRAVMAELLAKMLWEIKAVHFNAAQPYKLASGMASPVYIDCRKLLSFPRIRSTVMDFAASTLLRDAGFEQFDCIAGGETAGIPFAALLADRLGLPMIYVRKQPKGHGRNAQIEGNMPEGSRVLVIEDLTTAGGSMFKFIDAVRAAGGIVDHGIALFFYGIFGEQRFADGKVRLHHIATWRNVLPSPGSRSSSTTRRCRKSSPSSMRRWLGRERMVA.

5-phospho-alpha-D-ribose 1-diphosphate contacts are provided by residues arginine 107, lysine 108, lysine 111, histidine 113, and 133–141; that span reads EDLTTAGGS. Threonine 137 is a binding site for orotate. Positions 192-211 are enriched in low complexity; it reads SPGSRSSSTTRRCRKSSPSS. Residues 192–212 form a disordered region; sequence SPGSRSSSTTRRCRKSSPSSM.

The protein belongs to the purine/pyrimidine phosphoribosyltransferase family. PyrE subfamily. In terms of assembly, homodimer. Mg(2+) serves as cofactor.

The enzyme catalyses orotidine 5'-phosphate + diphosphate = orotate + 5-phospho-alpha-D-ribose 1-diphosphate. It participates in pyrimidine metabolism; UMP biosynthesis via de novo pathway; UMP from orotate: step 1/2. Catalyzes the transfer of a ribosyl phosphate group from 5-phosphoribose 1-diphosphate to orotate, leading to the formation of orotidine monophosphate (OMP). The chain is Orotate phosphoribosyltransferase (pyrE) from Rhizobium leguminosarum bv. trifolii.